Reading from the N-terminus, the 132-residue chain is Large ribosomal subunit protein bL19 (132 aa).

It belongs to the bacterial ribosomal protein bL19 family.

Its function is as follows. This protein is located at the 30S-50S ribosomal subunit interface and may play a role in the structure and function of the aminoacyl-tRNA binding site. In Nitrosomonas europaea (strain ATCC 19718 / CIP 103999 / KCTC 2705 / NBRC 14298), this protein is Large ribosomal subunit protein bL19.